The following is a 127-amino-acid chain: Large ribosomal subunit protein bL12 (127 aa).

A disordered region spans residues 96–127; sequence GTPSTLKEAVSKDDAEEAAKQLKEAGAEVEVK. Positions 104–127 are enriched in basic and acidic residues; that stretch reads AVSKDDAEEAAKQLKEAGAEVEVK.

Belongs to the bacterial ribosomal protein bL12 family. As to quaternary structure, homodimer. Part of the ribosomal stalk of the 50S ribosomal subunit. Forms a multimeric L10(L12)X complex, where L10 forms an elongated spine to which 2 to 4 L12 dimers bind in a sequential fashion. Binds GTP-bound translation factors.

Its function is as follows. Forms part of the ribosomal stalk which helps the ribosome interact with GTP-bound translation factors. Is thus essential for accurate translation. The polypeptide is Large ribosomal subunit protein bL12 (Oleidesulfovibrio alaskensis (strain ATCC BAA-1058 / DSM 17464 / G20) (Desulfovibrio alaskensis)).